Consider the following 117-residue polypeptide: Large ribosomal subunit protein bL19 (117 aa).

The protein belongs to the bacterial ribosomal protein bL19 family.

Its function is as follows. This protein is located at the 30S-50S ribosomal subunit interface and may play a role in the structure and function of the aminoacyl-tRNA binding site. This Leptothrix cholodnii (strain ATCC 51168 / LMG 8142 / SP-6) (Leptothrix discophora (strain SP-6)) protein is Large ribosomal subunit protein bL19.